The chain runs to 129 residues: Large ribosomal subunit protein bL12c (129 aa).

It belongs to the bacterial ribosomal protein bL12 family. As to quaternary structure, homodimer. Part of the ribosomal stalk of the 50S ribosomal subunit. Forms a multimeric L10(L12)X complex, where L10 forms an elongated spine to which 2 to 4 L12 dimers bind in a sequential fashion. Binds GTP-bound translation factors.

It is found in the plastid. The protein localises to the chloroplast. In terms of biological role, forms part of the ribosomal stalk which helps the ribosome interact with GTP-bound translation factors. Is thus essential for accurate translation. The sequence is that of Large ribosomal subunit protein bL12c from Porphyra purpurea (Red seaweed).